A 247-amino-acid polypeptide reads, in one-letter code: Uroporphyrinogen-III C-methyltransferase (247 aa).

Residues Pro-12, 117-118 (TA), Met-168, Ala-197, and Ala-225 contribute to the S-adenosyl-L-homocysteine site.

It belongs to the precorrin methyltransferase family.

The enzyme catalyses uroporphyrinogen III + 2 S-adenosyl-L-methionine = precorrin-2 + 2 S-adenosyl-L-homocysteine + H(+). It participates in cofactor biosynthesis; adenosylcobalamin biosynthesis; precorrin-2 from uroporphyrinogen III: step 1/1. It functions in the pathway porphyrin-containing compound metabolism; siroheme biosynthesis; precorrin-2 from uroporphyrinogen III: step 1/1. Catalyzes the two successive C-2 and C-7 methylation reactions involved in the conversion of uroporphyrinogen III to precorrin-2 via the intermediate formation of precorrin-1. It is a step in the biosynthesis of both cobalamin (vitamin B12) and siroheme. This is Uroporphyrinogen-III C-methyltransferase from Pseudomonas fluorescens.